The chain runs to 389 residues: Succinate--CoA ligase [ADP-forming] subunit beta (389 aa).

Residues 9-244 (KEILRKFGVA…LDEEDPAEVE (236 aa)) enclose the ATP-grasp domain. Residues lysine 46, 53 to 55 (GRG), glutamate 99, alanine 102, and glutamate 107 contribute to the ATP site. Residues asparagine 199 and aspartate 213 each contribute to the Mg(2+) site. Substrate-binding positions include asparagine 264 and 321–323 (GIM).

This sequence belongs to the succinate/malate CoA ligase beta subunit family. As to quaternary structure, heterotetramer of two alpha and two beta subunits. Mg(2+) serves as cofactor.

The catalysed reaction is succinate + ATP + CoA = succinyl-CoA + ADP + phosphate. It carries out the reaction GTP + succinate + CoA = succinyl-CoA + GDP + phosphate. The protein operates within carbohydrate metabolism; tricarboxylic acid cycle; succinate from succinyl-CoA (ligase route): step 1/1. Functionally, succinyl-CoA synthetase functions in the citric acid cycle (TCA), coupling the hydrolysis of succinyl-CoA to the synthesis of either ATP or GTP and thus represents the only step of substrate-level phosphorylation in the TCA. The beta subunit provides nucleotide specificity of the enzyme and binds the substrate succinate, while the binding sites for coenzyme A and phosphate are found in the alpha subunit. The chain is Succinate--CoA ligase [ADP-forming] subunit beta from Paraburkholderia phytofirmans (strain DSM 17436 / LMG 22146 / PsJN) (Burkholderia phytofirmans).